The primary structure comprises 176 residues: MTLILGIDPGSRITGYGVVRDTGRGCVYVASGCIRTGTGSGELHERLQIVYRGVREVIKTYGPVTMGIEKVFMARNADSALKLGQARGAAIVAGAEEALEIAEYTATQVKQAVAGTGGANKEQVMMMVMHLLKLTQKPQIDASDALAIALCHAHTRSSLIPHGLGTARSRGGRLRL.

Catalysis depends on residues D8, E69, and D141. Positions 8, 69, and 141 each coordinate Mg(2+).

This sequence belongs to the RuvC family. Homodimer which binds Holliday junction (HJ) DNA. The HJ becomes 2-fold symmetrical on binding to RuvC with unstacked arms; it has a different conformation from HJ DNA in complex with RuvA. In the full resolvosome a probable DNA-RuvA(4)-RuvB(12)-RuvC(2) complex forms which resolves the HJ. It depends on Mg(2+) as a cofactor.

The protein resides in the cytoplasm. It catalyses the reaction Endonucleolytic cleavage at a junction such as a reciprocal single-stranded crossover between two homologous DNA duplexes (Holliday junction).. In terms of biological role, the RuvA-RuvB-RuvC complex processes Holliday junction (HJ) DNA during genetic recombination and DNA repair. Endonuclease that resolves HJ intermediates. Cleaves cruciform DNA by making single-stranded nicks across the HJ at symmetrical positions within the homologous arms, yielding a 5'-phosphate and a 3'-hydroxyl group; requires a central core of homology in the junction. The consensus cleavage sequence is 5'-(A/T)TT(C/G)-3'. Cleavage occurs on the 3'-side of the TT dinucleotide at the point of strand exchange. HJ branch migration catalyzed by RuvA-RuvB allows RuvC to scan DNA until it finds its consensus sequence, where it cleaves and resolves the cruciform DNA. In Pseudomonas syringae pv. tomato (strain ATCC BAA-871 / DC3000), this protein is Crossover junction endodeoxyribonuclease RuvC.